A 144-amino-acid chain; its full sequence is Transcriptional regulator SlyA (144 aa).

The 134-residue stretch at 2-135 (ESPLGSDLAR…LITLIAKLEH (134 aa)) folds into the HTH marR-type domain. A DNA-binding region (H-T-H motif) is located at residues 49–72 (QIQLAKAIGIEQPSLVRTLDQLEE).

It belongs to the SlyA family. Homodimer.

Functionally, transcription regulator that can specifically activate or repress expression of target genes. This is Transcriptional regulator SlyA from Shigella boydii serotype 18 (strain CDC 3083-94 / BS512).